Reading from the N-terminus, the 1319-residue chain is ERAD-associated E3 ubiquitin-protein ligase DOA10 (1319 aa).

Methionine 1 is modified (N-acetylmethionine). Residues 1–131 are Cytoplasmic-facing; the sequence is MDVDSDVNVS…LTFFEKARLA (131 aa). The RING-CH-type zinc-finger motif lies at 31–100; it reads DDAPSGATCR…DICHYPIQFK (70 aa). Cysteine 39, cysteine 42, cysteine 56, cysteine 58, histidine 66, cysteine 69, cysteine 90, and cysteine 93 together coordinate Zn(2+). A helical membrane pass occupies residues 132-152; the sequence is LTIGLAAVLYIIGVPLVWNMF. At 153–203 the chain is on the lumenal side; that stretch reads GKLYTMMLDGSSPYPGDFLKSLIYGYDQSATPELTTRAIFYQLLQNHSFTS. A helical membrane pass occupies residues 204-224; that stretch reads LQFIMIVILHIALYFQYDMIV. The Cytoplasmic segment spans residues 225 to 468; that stretch reads REDVFSKMVF…GPLVINLKLK (244 aa). The segment covering 291 to 306 has biased composition (low complexity); that stretch reads ADNNNNVINPRNDNVP. Disordered regions lie at residues 291–315 and 329–381; these read ADNN…DHRN and EATE…EADY. A helical membrane pass occupies residues 469–489; sequence LLNVIAYFIIAVVFTAIYLAI. At 490–491 the chain is on the lumenal side; the sequence is SY. Residues 492–512 form a helical membrane-spanning segment; sequence LFPTFIGFGLLKIYFGIFKVI. At 513-626 the chain is on the cytoplasmic side; sequence LRGLCHLYYL…LFALKCTFKV (114 aa). Residues 627 to 647 traverse the membrane as a helical segment; it reads FTLFFIELAGFPILAGVMLDF. Over 648-660 the chain is Lumenal; that stretch reads SLFCPILASNSRM. A helical transmembrane segment spans residues 661–681; it reads LWVPSICAIWPPFSLFVYWTI. Topologically, residues 682–739 are cytoplasmic; the sequence is GTLYMYWFAKYIGMIRKNIIRPGVLFFIRSPEDPNIKILHDSLIHPMSIQLSRLCLSM. The helical transmembrane segment at 740 to 760 threads the bilayer; it reads FIYAIFIVLGFGFHTRIFFPF. Residues 761 to 777 are Lumenal-facing; the sequence is MLKSNLLSVPEAYKPTS. Residues 778–797 form a helical membrane-spanning segment; that stretch reads IISWKFNTILLTLYFTKRIL. The Cytoplasmic portion of the chain corresponds to 798 to 965; it reads ESSSYVKPLL…YVPPDFRLRY (168 aa). Residues 966-986 form a helical membrane-spanning segment; the sequence is MTLLGLVWLFASILMLGVTFI. Residues 987 to 1019 are Lumenal-facing; the sequence is SQALINFVCSFGFLPVVKLLLGERNKVYVAWKE. A helical membrane pass occupies residues 1020 to 1040; it reads LSDISYSYLNIYYVCVGSVCL. At 1041 to 1113 the chain is on the cytoplasmic side; that stretch reads SKIAKDILHF…IFDSMLVKYN (73 aa). Residues 1114–1134 form a helical membrane-spanning segment; it reads LMVFIAIMIAVIRTMVSWVVL. Residues 1135 to 1168 lie on the Lumenal side of the membrane; the sequence is TDGILACYNYLTIRVFGNSSYTIGNSKWFKYDES. Residues 1169-1189 traverse the membrane as a helical segment; that stretch reads LLFVVWIISSMVNFGTGYKSL. The Cytoplasmic segment spans residues 1190-1213; the sequence is KLFFRNRNTSKLNFLKTMALELFK. The chain crosses the membrane as a helical span at residues 1214-1234; it reads QGFLHMVIYVLPIIILSLVFL. The Lumenal portion of the chain corresponds to 1235 to 1270; it reads RDVSTKQIIDISHGSRSFTLSLNESFPTWTRMQDIY. The helical transmembrane segment at 1271 to 1291 threads the bilayer; that stretch reads FGLLIALESFTFFFQATVLFI. Residues 1292 to 1319 lie on the Cytoplasmic side of the membrane; sequence QWFKSTVQNVKDEVYTKGRALENLPDES.

This sequence belongs to the DOA10/MARCH6 family. In terms of assembly, component of the DOA10 ubiquitin ligase complex which contains E3 ligase SSM4/DOA10 and CDC48-binding protein UBX2/SEL1. The DOA10 complex interacts with the heterotrimeric CDC48-NPL4-UFD1 ATPase complex which is recruited by UBX2/SEL1 via its interaction with CDC48. Interacts with its associated ubiquitin conjugating enzymes UBC6 and UBC7 with its membrane anchor CUE1. Interacts with PEX29.

The protein localises to the endoplasmic reticulum membrane. It localises to the nucleus inner membrane. The enzyme catalyses S-ubiquitinyl-[E2 ubiquitin-conjugating enzyme]-L-cysteine + [acceptor protein]-L-lysine = [E2 ubiquitin-conjugating enzyme]-L-cysteine + N(6)-ubiquitinyl-[acceptor protein]-L-lysine.. It functions in the pathway protein modification; protein ubiquitination. In terms of biological role, E3 ubiquitin-protein ligase which accepts ubiquitin specifically from endoplasmic reticulum-associated UBC6 and UBC7 E2 ligases, and transfers it to substrates promoting their degradation. Mediates the degradation of a broad range of substrates, including endoplasmic reticulum membrane proteins (ERQC), soluble nuclear proteins and soluble cytoplasmic proteins (CytoQC). Component of the DOA10 ubiquitin ligase complex, which is part of the ERAD-C pathway responsible for the rapid degradation of membrane proteins with misfolded cytoplasmic domains. ERAD-C substrates are ubiquitinated through DOA10 in conjunction with the E2 ubiquitin-conjugating enzymes UBC6 and UBC7-CUE1. Ubiquitinated substrates are then removed to the cytosol via the action of the UFD1-NPL4-CDC48/p97 (UNC) AAA ATPase complex and targeted to the proteasome. Also recognizes the N-terminally acetylated residue of proteins as degradation signal (degron). N-terminally acetylated target proteins include MATALPHA2, TBF1, SLK19, YMR090W, HIS3, HSP104, UBP6 and ARO8. Catalyzes ubiquitination of mislocalized tail-anchored proteins that are extracted from the mitochondrion membrane by MSP1: following extraction, mistargeted proteins are transferred to the endoplasmic reticulum, where they are ubiquitinated by DOA10 and degraded by the proteasome. The protein is ERAD-associated E3 ubiquitin-protein ligase DOA10 (SSM4) of Saccharomyces cerevisiae (strain ATCC 204508 / S288c) (Baker's yeast).